Consider the following 289-residue polypeptide: MSGGGDATVSAELIAARKRLQAAGVADPLVDARLLIADVTGFSLTDFVMKPEHPVTQDESARIAAMIERRAEGEPVHRILGHREFHGLDLLLSKETLEPRPDTEVLVDTLLPALKEAVSRKGSARILDLGTGTGAICLALLKECAQASGIGSDISADALETAAKNAARNGLDSRFETIRSNWFEKISGRFDIIVSNPPYIRTDIVATLDPEVRNHDPMAALDGGQDGLAPYRLIAADAGRFLVENGTVGVEIGFDQRLDVSAIFASHGFSLLDAVKDYGGNDRVLTFRR.

S-adenosyl-L-methionine-binding positions include 130–134 (GTGTG), Asp-153, Trp-182, and Asn-196. 196-199 (NPPY) is a substrate binding site.

It belongs to the protein N5-glutamine methyltransferase family. PrmC subfamily.

The catalysed reaction is L-glutaminyl-[peptide chain release factor] + S-adenosyl-L-methionine = N(5)-methyl-L-glutaminyl-[peptide chain release factor] + S-adenosyl-L-homocysteine + H(+). Methylates the class 1 translation termination release factors RF1/PrfA and RF2/PrfB on the glutamine residue of the universally conserved GGQ motif. This Agrobacterium fabrum (strain C58 / ATCC 33970) (Agrobacterium tumefaciens (strain C58)) protein is Release factor glutamine methyltransferase.